Consider the following 238-residue polypeptide: Uridylate kinase (238 aa).

12–15 (KLSG) is an ATP binding site. The tract at residues 20-25 (GEKGFG) is involved in allosteric activation by GTP. Gly54 provides a ligand contact to UMP. ATP-binding residues include Gly55 and Arg59. UMP contacts are provided by residues Asp72 and 133 to 140 (TGNPYFST). ATP contacts are provided by Tyr166 and Asp169.

Belongs to the UMP kinase family. Homohexamer.

Its subcellular location is the cytoplasm. The catalysed reaction is UMP + ATP = UDP + ADP. Its pathway is pyrimidine metabolism; CTP biosynthesis via de novo pathway; UDP from UMP (UMPK route): step 1/1. Allosterically activated by GTP. Inhibited by UTP. Its function is as follows. Catalyzes the reversible phosphorylation of UMP to UDP. The polypeptide is Uridylate kinase (Clostridium botulinum (strain Hall / ATCC 3502 / NCTC 13319 / Type A)).